The following is a 407-amino-acid chain: MKRAFIMVLDSFGIGEAKDAKSFGDEGADTLGHIARACARGEADIGRQGPLHLPNLSRLGLGKAALESTGRFPEGLDENAEVIGAYGYANELSSGKDTPSGHWEIAGVPVLFDWGYFHEHQNSFPQALLDTLVERANLPGYLGNCHSSGTVILDQLGEEHMKSGKPIFYTSADSVFQIACHEETFGLERLYELCEIARDELNKGGYNIGRVIARPFVGDKAGHFQRTGNRHDLAVEPPAPTMLKKLVDEKQGDVVSIGKIADIYANVGITKKVKATGIDALFDATLQEMRQAGNDTIVFTNFVDFDSSYGHRRDVAGYAAALELFDRRLPEMLALVKEDDILILTADHGCDPTWHGSDHTREHIPVLVYGPKVKPGSLGERDTFADIGQTVARYFGLSPMAYGKPMF.

The Mn(2+) site is built by Asp10, Asp306, His311, Asp347, His348, and His359.

Belongs to the phosphopentomutase family. Mn(2+) is required as a cofactor.

Its subcellular location is the cytoplasm. It carries out the reaction 2-deoxy-alpha-D-ribose 1-phosphate = 2-deoxy-D-ribose 5-phosphate. It catalyses the reaction alpha-D-ribose 1-phosphate = D-ribose 5-phosphate. Its pathway is carbohydrate degradation; 2-deoxy-D-ribose 1-phosphate degradation; D-glyceraldehyde 3-phosphate and acetaldehyde from 2-deoxy-alpha-D-ribose 1-phosphate: step 1/2. Its function is as follows. Isomerase that catalyzes the conversion of deoxy-ribose 1-phosphate (dRib-1-P) and ribose 1-phosphate (Rib-1-P) to deoxy-ribose 5-phosphate (dRib-5-P) and ribose 5-phosphate (Rib-5-P), respectively. The polypeptide is Phosphopentomutase (Edwardsiella ictaluri (strain 93-146)).